We begin with the raw amino-acid sequence, 100 residues long: MAKKSMIERDKKRENLMNKYLVKRQQLKTRLNETDSVEEKLLLNQELQKLPRNSAPSRVRIRCWLTGRPRGNYRDFGVSRHVLREMAHQGLLPGVTKSSW.

This sequence belongs to the universal ribosomal protein uS14 family. In terms of assembly, part of the 30S ribosomal subunit.

Its subcellular location is the plastid. The protein localises to the cyanelle. Binds 16S rRNA, required for the assembly of 30S particles. This chain is Small ribosomal subunit protein uS14c, found in Cyanophora paradoxa.